The primary structure comprises 194 residues: Probable nicotinate-nucleotide adenylyltransferase (194 aa).

It belongs to the NadD family.

The enzyme catalyses nicotinate beta-D-ribonucleotide + ATP + H(+) = deamido-NAD(+) + diphosphate. The protein operates within cofactor biosynthesis; NAD(+) biosynthesis; deamido-NAD(+) from nicotinate D-ribonucleotide: step 1/1. In terms of biological role, catalyzes the reversible adenylation of nicotinate mononucleotide (NaMN) to nicotinic acid adenine dinucleotide (NaAD). This is Probable nicotinate-nucleotide adenylyltransferase from Brucella abortus (strain 2308).